The primary structure comprises 500 residues: Probable lipoprotein aminopeptidase LpqL (500 aa).

Positions 1-24 (MVNKSRMMPAVLAVAVVVAFLTTG) are cleaved as a signal peptide. Cys25 carries N-palmitoyl cysteine lipidation. Cys25 carries S-diacylglycerol cysteine lipidation. The PA domain maps to 140 to 231 (VTGPLVAAPA…VTKSVGFQLR (92 aa)). Zn(2+) is bound by residues His271 and Asp283. Residue Glu316 is the Proton acceptor of the active site. Zn(2+) is bound by residues Glu317, Asp345, and His448.

The protein belongs to the peptidase M28 family. M28A subfamily. Requires Zn(2+) as cofactor. Post-translationally, modified by Lgt on Cys-25 with an S-linked diacylglycerol with a mixture of C16 and C19 fatty acids (palmitic and tuberculostearic acid), signal peptide is removed by LspA, modified by Lnt with an amide-linked mixture of C16 and C19 fatty acids, expressed in M.bovis.

Its subcellular location is the cell membrane. The catalysed reaction is Release of an N-terminal amino acid, Xaa-|-Yaa-, in which Xaa is preferably Leu, but may be other amino acids including Pro although not Arg or Lys, and Yaa may be Pro. Amino acid amides and methyl esters are also readily hydrolyzed, but rates on arylamides are exceedingly low.. An aminopeptidase; acts on free N-terminal amino groups with a very strong preference for Leu in the first position. In Mycobacterium tuberculosis (strain ATCC 25618 / H37Rv), this protein is Probable lipoprotein aminopeptidase LpqL (lpqL).